A 225-amino-acid chain; its full sequence is Uridylate kinase (225 aa).

An ATP-binding site is contributed by 9-10; that stretch reads GS. Gly46 provides a ligand contact to UMP. Gly47 and Arg51 together coordinate ATP. UMP is bound by residues Asp67 and 115–121; that span reads THPAHTT. The ATP site is built by Thr141, Asn142, Tyr147, and Asp150.

Belongs to the UMP kinase family. Homohexamer.

It localises to the cytoplasm. The catalysed reaction is UMP + ATP = UDP + ADP. The protein operates within pyrimidine metabolism; CTP biosynthesis via de novo pathway; UDP from UMP (UMPK route): step 1/1. Inhibited by UTP. Its function is as follows. Catalyzes the reversible phosphorylation of UMP to UDP. In Methanococcus maripaludis (strain C6 / ATCC BAA-1332), this protein is Uridylate kinase.